The sequence spans 158 residues: Sec-independent protein translocase protein TatB (158 aa).

The helical transmembrane segment at Met1 to Gly21 threads the bilayer. The disordered stretch occupies residues Arg73 to Ala158. A compositionally biased stretch (basic and acidic residues) spans Ala83–Pro92. 2 stretches are compositionally biased toward low complexity: residues Lys94–Ala132 and Ala138–Ala158.

Belongs to the TatB family. The Tat system comprises two distinct complexes: a TatABC complex, containing multiple copies of TatA, TatB and TatC subunits, and a separate TatA complex, containing only TatA subunits. Substrates initially bind to the TatABC complex, which probably triggers association of the separate TatA complex to form the active translocon.

It localises to the cell inner membrane. In terms of biological role, part of the twin-arginine translocation (Tat) system that transports large folded proteins containing a characteristic twin-arginine motif in their signal peptide across membranes. Together with TatC, TatB is part of a receptor directly interacting with Tat signal peptides. TatB may form an oligomeric binding site that transiently accommodates folded Tat precursor proteins before their translocation. This is Sec-independent protein translocase protein TatB from Cereibacter sphaeroides (strain ATCC 17029 / ATH 2.4.9) (Rhodobacter sphaeroides).